A 244-amino-acid polypeptide reads, in one-letter code: tRNA (guanine-N(7)-)-methyltransferase (244 aa).

The segment covering 1–11 has biased composition (pro residues); it reads MTDTHVPPPEL. Positions 1–23 are disordered; the sequence is MTDTHVPPPELPAAEEGEERPHR. S-adenosyl-L-methionine is bound by residues glutamate 74, glutamate 99, aspartate 126, and aspartate 149. The active site involves aspartate 149. Residues lysine 153, aspartate 185, and 222-225 contribute to the substrate site; that span reads TKFE.

This sequence belongs to the class I-like SAM-binding methyltransferase superfamily. TrmB family.

It carries out the reaction guanosine(46) in tRNA + S-adenosyl-L-methionine = N(7)-methylguanosine(46) in tRNA + S-adenosyl-L-homocysteine. It participates in tRNA modification; N(7)-methylguanine-tRNA biosynthesis. Its function is as follows. Catalyzes the formation of N(7)-methylguanine at position 46 (m7G46) in tRNA. This chain is tRNA (guanine-N(7)-)-methyltransferase, found in Pseudomonas syringae pv. tomato (strain ATCC BAA-871 / DC3000).